Here is a 226-residue protein sequence, read N- to C-terminus: Lipoprotein-releasing system ATP-binding protein LolD (226 aa).

The ABC transporter domain occupies 5–226; it reads LKATNINKIY…LLRNGHWENY (222 aa). 41 to 48 is a binding site for ATP; sequence GTSGSGKS.

It belongs to the ABC transporter superfamily. Lipoprotein translocase (TC 3.A.1.125) family. As to quaternary structure, the complex is composed of two ATP-binding proteins (LolD) and two transmembrane proteins (LolC and LolE).

The protein localises to the cell inner membrane. Functionally, part of the ABC transporter complex LolCDE involved in the translocation of mature outer membrane-directed lipoproteins, from the inner membrane to the periplasmic chaperone, LolA. Responsible for the formation of the LolA-lipoprotein complex in an ATP-dependent manner. The sequence is that of Lipoprotein-releasing system ATP-binding protein LolD from Psychrobacter cryohalolentis (strain ATCC BAA-1226 / DSM 17306 / VKM B-2378 / K5).